Consider the following 495-residue polypeptide: F(420)H(2) dehydrogenase subunit M (495 aa).

15 helical membrane passes run 1–21 (MLPV…VTFF), 27–47 (LAAG…LYAY), 57–77 (MQFY…SVGI), 80–100 (VSMP…LFTW), 108–128 (NRFY…FVAL), 130–150 (FVVF…IVNL), 163–183 (FFIY…GLFY), 215–235 (IFLA…FHSW), 249–269 (ILFI…LPML), 277–297 (LMIM…ALLA), 315–335 (MGYV…GAMF), 338–358 (FSHG…QTAA), 378–398 (VAMM…GFIA), 412–432 (VFVV…LWAM), and 450–470 (INSI…YFGL).

It belongs to the complex I subunit 4 family. In terms of assembly, the FPO complex is composed of at least 13 different subunits. FpoA, FpoH, FpoJ, FpoK, FpoL, FpoM and FpoN proteins constitute the membrane sector of the complex.

The protein localises to the cell membrane. The enzyme catalyses methanophenazine + reduced coenzyme F420-(gamma-L-Glu)(n) = dihydromethanophenazine + oxidized coenzyme F420-(gamma-L-Glu)(n) + H(+). In terms of biological role, component of the F(420)H(2) dehydrogenase (FPO complex) which is part of the energy-conserving F(420)H(2):heterodisulfide oxidoreductase system. The membrane-bound electron transfer system of the complex plays an important role in the metabolism of methylotrophic methanogens when the organisms grow on methanol or methylamines. Catalyzes the oxidation of methanophenazine to dihydromethanophenazine. It shuttles electrons from F(420)H(2), via FAD and iron-sulfur (Fe-S) centers, to methanophenazine (an electron carrier in the membrane). It couples the redox reaction to proton translocation (for every two electrons transferred, two hydrogen ions are translocated across the cytoplasmic membrane), and thus conserves the redox energy in a proton gradient. It also catalyzes the oxidation of F(420)H(2) with quinones such as 2,3-dimethyl-1,4-naphthoquinone, 2-methyl-1,4-naphthoquinone and tetramethyl-p-benzoquinone. In Methanosarcina mazei (strain ATCC BAA-159 / DSM 3647 / Goe1 / Go1 / JCM 11833 / OCM 88) (Methanosarcina frisia), this protein is F(420)H(2) dehydrogenase subunit M (fpoM).